A 107-amino-acid polypeptide reads, in one-letter code: Magnetosome protein MmsF (107 aa).

The Cytoplasmic segment spans residues 1-13 (MTEAILRSTLGAR). The chain crosses the membrane as a helical span at residues 14–34 (TTVMAALSYLSVLCFVPLLVD). The Lumenal portion of the chain corresponds to 35–46 (RDDEFVYFHAKQ). The helical transmembrane segment at 47 to 67 (GLVIWMWGVLALFALHVPVLG) threads the bilayer. Residues 68 to 69 (KW) are Cytoplasmic-facing. A helical transmembrane segment spans residues 70-90 (IFGFSSMGVLVFSLLGLVSVV). Topologically, residues 91–107 (FQRAWKLPLISWVAHRI) are lumenal.

The protein belongs to the magnetosome MamF/MmsF protein family. In terms of assembly, may oligomerize.

Its subcellular location is the magnetosome membrane. Its function may be negatively regulated by one of the MamGFDC proteins. Its function is as follows. Plays a major role in synthesis of cubooctahedral magnetite crystals by controlling crystal growth and morphology after nucleation. Has a partially redundant function with MamF. When overexpressed in E.coli the soluble protein self assembles into shells of about 36 nm. This protein mediates the formation of magnetite nanoparticles from a solution of Fe(2+) and Fe(3+) sulfate; the crystals are larger and lack alternative iron oxide/oxyhydroxide species seen in the protein's absence. This Paramagnetospirillum magneticum (strain ATCC 700264 / AMB-1) (Magnetospirillum magneticum) protein is Magnetosome protein MmsF.